Here is a 258-residue protein sequence, read N- to C-terminus: MLIVVSPAKTLDYESPLVTHKFTQPELVDYSKQLIEVCRQLTPADVASLMKVSDKIADLNVGRFQEWSEEFTPDNARQAILAFKGDVYTGLEAETLNDDDFDYAQKHLRMLSGLYGLLKPLDLMQPYRLEMGTKLANPKGSNLYQFWGNVITEKLNEAIAAQGDNVLINLASNEYFKAVKPKALDAQVITPIFKDAKNGQYKVISFFAKKARGMMARYIIENRISSVADLTQFDSAGYYFVEEESTPTELVFKREEQH.

The protein belongs to the UPF0246 family.

This Vibrio vulnificus (strain YJ016) protein is UPF0246 protein VV0659.